The sequence spans 155 residues: Ribosomal RNA large subunit methyltransferase H (155 aa).

Gly103 provides a ligand contact to S-adenosyl-L-methionine.

This sequence belongs to the RNA methyltransferase RlmH family. Homodimer.

It is found in the cytoplasm. It catalyses the reaction pseudouridine(1915) in 23S rRNA + S-adenosyl-L-methionine = N(3)-methylpseudouridine(1915) in 23S rRNA + S-adenosyl-L-homocysteine + H(+). Its function is as follows. Specifically methylates the pseudouridine at position 1915 (m3Psi1915) in 23S rRNA. This chain is Ribosomal RNA large subunit methyltransferase H, found in Caulobacter vibrioides (strain ATCC 19089 / CIP 103742 / CB 15) (Caulobacter crescentus).